The following is a 346-amino-acid chain: Holliday junction branch migration complex subunit RuvB (346 aa).

The interval 4–185 is large ATPase domain (RuvB-L); that stretch reads SDRIITASPF…FGIVSRLEFY (182 aa). ATP contacts are provided by residues L24, R25, G66, K69, T70, T71, 132 to 134, R175, Y185, and R222; that span reads EDY. Position 70 (T70) interacts with Mg(2+). Residues 186–256 are small ATPAse domain (RuvB-S); it reads TADELGKIVT…VADAALQMLD (71 aa). The head domain (RuvB-H) stretch occupies residues 259–346; sequence ATGLDVLDRK…TTVPSLFDPD (88 aa). Positions 295, 314, and 319 each coordinate DNA.

The protein belongs to the RuvB family. In terms of assembly, homohexamer. Forms an RuvA(8)-RuvB(12)-Holliday junction (HJ) complex. HJ DNA is sandwiched between 2 RuvA tetramers; dsDNA enters through RuvA and exits via RuvB. An RuvB hexamer assembles on each DNA strand where it exits the tetramer. Each RuvB hexamer is contacted by two RuvA subunits (via domain III) on 2 adjacent RuvB subunits; this complex drives branch migration. In the full resolvosome a probable DNA-RuvA(4)-RuvB(12)-RuvC(2) complex forms which resolves the HJ.

The protein resides in the cytoplasm. It catalyses the reaction ATP + H2O = ADP + phosphate + H(+). Its function is as follows. The RuvA-RuvB-RuvC complex processes Holliday junction (HJ) DNA during genetic recombination and DNA repair, while the RuvA-RuvB complex plays an important role in the rescue of blocked DNA replication forks via replication fork reversal (RFR). RuvA specifically binds to HJ cruciform DNA, conferring on it an open structure. The RuvB hexamer acts as an ATP-dependent pump, pulling dsDNA into and through the RuvAB complex. RuvB forms 2 homohexamers on either side of HJ DNA bound by 1 or 2 RuvA tetramers; 4 subunits per hexamer contact DNA at a time. Coordinated motions by a converter formed by DNA-disengaged RuvB subunits stimulates ATP hydrolysis and nucleotide exchange. Immobilization of the converter enables RuvB to convert the ATP-contained energy into a lever motion, pulling 2 nucleotides of DNA out of the RuvA tetramer per ATP hydrolyzed, thus driving DNA branch migration. The RuvB motors rotate together with the DNA substrate, which together with the progressing nucleotide cycle form the mechanistic basis for DNA recombination by continuous HJ branch migration. Branch migration allows RuvC to scan DNA until it finds its consensus sequence, where it cleaves and resolves cruciform DNA. This chain is Holliday junction branch migration complex subunit RuvB, found in Nitrosomonas europaea (strain ATCC 19718 / CIP 103999 / KCTC 2705 / NBRC 14298).